The sequence spans 172 residues: Adenylate kinase isoenzyme 6 (172 aa).

Positions 13, 15, 16, 17, and 18 each coordinate ATP. The NMPbind stretch occupies residues 33 to 56 (NVGDLAREGQLYDGYDEEYGCPIL). The interval 108–118 (TRGYNEKKLQD) is LID. R109 contributes to the ATP binding site.

The protein belongs to the adenylate kinase family. AK6 subfamily. As to quaternary structure, monomer and homodimer. Interacts with small ribosomal subunit protein uS11. Not a structural component of 43S pre-ribosomes, but transiently interacts with them by binding to uS11. Interacts with COIL (via C-terminus).

It is found in the cytoplasm. The protein localises to the nucleus. It localises to the nucleoplasm. The protein resides in the cajal body. It catalyses the reaction AMP + ATP = 2 ADP. It carries out the reaction ATP + H2O = ADP + phosphate + H(+). Functionally, broad-specificity nucleoside monophosphate (NMP) kinase that catalyzes the reversible transfer of the terminal phosphate group between nucleoside triphosphates and monophosphates. Also has ATPase activity. Involved in the late cytoplasmic maturation steps of the 40S ribosomal particles, specifically 18S rRNA maturation. While NMP activity is not required for ribosome maturation, ATPase activity is. Associates transiently with small ribosomal subunit protein uS11. ATP hydrolysis breaks the interaction with uS11. May temporarily remove uS11 from the ribosome to enable a conformational change of the ribosomal RNA that is needed for the final maturation step of the small ribosomal subunit. Its NMP activity may have a role in nuclear energy homeostasis. May be involved in regulation of Cajal body (CB) formation. The polypeptide is Adenylate kinase isoenzyme 6 (Mus musculus (Mouse)).